The chain runs to 58 residues: INSICLLPSDGGVCRGRFTNYYYNSRTRRCETFRYGGCGGNANNFHTLRQCQATCYSS.

A BPTI/Kunitz inhibitor domain is found at 5–55 (CLLPSDGGVCRGRFTNYYYNSRTRRCETFRYGGCGGNANNFHTLRQCQATC). 3 cysteine pairs are disulfide-bonded: Cys5–Cys55, Cys14–Cys38, and Cys30–Cys51.

Belongs to the venom Kunitz-type family. Sea anemone type 2 potassium channel toxin subfamily.

The protein localises to the secreted. It is found in the nematocyst. Its function is as follows. Serine protease inhibitor. Shows activity on trypsin and also shows a weak inhibition against alpha-chymotrypsin. In Anthopleura aff. xanthogrammica (Sea anemone), this protein is PI-actitoxin-Axm2b.